A 216-amino-acid chain; its full sequence is Octanoyltransferase (216 aa).

Positions Pro-32–Glu-207 constitute a BPL/LPL catalytic domain. Substrate is bound by residues Arg-71–His-78, Ser-138–Gly-140, and Gly-151–Ala-153. Cys-169 acts as the Acyl-thioester intermediate in catalysis.

This sequence belongs to the LipB family.

Its subcellular location is the cytoplasm. The enzyme catalyses octanoyl-[ACP] + L-lysyl-[protein] = N(6)-octanoyl-L-lysyl-[protein] + holo-[ACP] + H(+). It participates in protein modification; protein lipoylation via endogenous pathway; protein N(6)-(lipoyl)lysine from octanoyl-[acyl-carrier-protein]: step 1/2. Catalyzes the transfer of endogenously produced octanoic acid from octanoyl-acyl-carrier-protein onto the lipoyl domains of lipoate-dependent enzymes. Lipoyl-ACP can also act as a substrate although octanoyl-ACP is likely to be the physiological substrate. The chain is Octanoyltransferase from Pseudomonas putida (strain ATCC 47054 / DSM 6125 / CFBP 8728 / NCIMB 11950 / KT2440).